Consider the following 370-residue polypeptide: Chorismate synthase (370 aa).

Arg48 is a binding site for NADP(+). Residues 125–127, 241–242, Gly286, 301–305, and Arg327 contribute to the FMN site; these read RSS, NA, and KPTSS.

This sequence belongs to the chorismate synthase family. Homotetramer. Requires FMNH2 as cofactor.

It carries out the reaction 5-O-(1-carboxyvinyl)-3-phosphoshikimate = chorismate + phosphate. The protein operates within metabolic intermediate biosynthesis; chorismate biosynthesis; chorismate from D-erythrose 4-phosphate and phosphoenolpyruvate: step 7/7. Catalyzes the anti-1,4-elimination of the C-3 phosphate and the C-6 proR hydrogen from 5-enolpyruvylshikimate-3-phosphate (EPSP) to yield chorismate, which is the branch point compound that serves as the starting substrate for the three terminal pathways of aromatic amino acid biosynthesis. This reaction introduces a second double bond into the aromatic ring system. This is Chorismate synthase from Ruegeria sp. (strain TM1040) (Silicibacter sp.).